Reading from the N-terminus, the 151-residue chain is SsrA-binding protein (151 aa).

The disordered stretch occupies residues 132-151 (KRQTIKKRDQDREIHRKYGI).

Belongs to the SmpB family.

It is found in the cytoplasm. Its function is as follows. Required for rescue of stalled ribosomes mediated by trans-translation. Binds to transfer-messenger RNA (tmRNA), required for stable association of tmRNA with ribosomes. tmRNA and SmpB together mimic tRNA shape, replacing the anticodon stem-loop with SmpB. tmRNA is encoded by the ssrA gene; the 2 termini fold to resemble tRNA(Ala) and it encodes a 'tag peptide', a short internal open reading frame. During trans-translation Ala-aminoacylated tmRNA acts like a tRNA, entering the A-site of stalled ribosomes, displacing the stalled mRNA. The ribosome then switches to translate the ORF on the tmRNA; the nascent peptide is terminated with the 'tag peptide' encoded by the tmRNA and targeted for degradation. The ribosome is freed to recommence translation, which seems to be the essential function of trans-translation. The polypeptide is SsrA-binding protein (Lactobacillus gasseri (strain ATCC 33323 / DSM 20243 / BCRC 14619 / CIP 102991 / JCM 1131 / KCTC 3163 / NCIMB 11718 / NCTC 13722 / AM63)).